The primary structure comprises 222 residues: Probable glutathione-independent glyoxalase hsp3104 (222 aa).

Active-site residues include Cys124, His125, and Glu155.

This sequence belongs to the peptidase C56 family. HSP31-like subfamily.

The protein resides in the cytoplasm. It catalyses the reaction methylglyoxal + H2O = (R)-lactate + H(+). Its function is as follows. Catalyzes the conversion of methylglyoxal (MG) to D-lactate in a single glutathione (GSH)-independent step. May play a role in detoxifying endogenously produced glyoxals. Involved in protection against reactive oxygen species (ROS). The polypeptide is Probable glutathione-independent glyoxalase hsp3104 (Schizosaccharomyces pombe (strain 972 / ATCC 24843) (Fission yeast)).